Consider the following 165-residue polypeptide: MSATAEQNARNPKGKGGFARTVSQRKRKRLFLIGGALAVLAVAVGLMLTAFNQDIRFFRTPADLTEQDMTSGARFRLGGLVEEGSVSRTGSELRFTVTDTIKTVKVVFEGIPPDLFREGQGVVAEGRFGSDGLFRADNVLAKHDENYVPKDLADSLKKKGVWEGK.

Residues 1–29 (MSATAEQNARNPKGKGGFARTVSQRKRKR) lie on the Cytoplasmic side of the membrane. The helical; Signal-anchor for type II membrane protein transmembrane segment at 30 to 50 (LFLIGGALAVLAVAVGLMLTA) threads the bilayer. The Periplasmic segment spans residues 51–165 (FNQDIRFFRT…LKKKGVWEGK (115 aa)). Residues His143 and Tyr147 each contribute to the heme site.

The protein belongs to the CcmE/CycJ family.

It is found in the cell inner membrane. Its function is as follows. Heme chaperone required for the biogenesis of c-type cytochromes. Transiently binds heme delivered by CcmC and transfers the heme to apo-cytochromes in a process facilitated by CcmF and CcmH. The polypeptide is Cytochrome c-type biogenesis protein CcmE (Brucella abortus (strain S19)).